Consider the following 435-residue polypeptide: Angio-associated migratory cell protein (435 aa).

The segment at 1 to 65 (MESESESGAA…EEEEEGNEEG (65 aa)) is disordered. S20 is modified (phosphoserine). Positions 39–63 (DPDDLAQEMEDVDFEEEEEEEEGNE) are enriched in acidic residues. WD repeat units follow at residues 90–130 (LHSA…LLFE), 133–172 (GHKD…EVWS), 174–213 (EAGD…KTFQ), 215–255 (PNCP…HVLK), 259–300 (GHQG…GVFR), 316–355 (SESN…LRHQ), 357–396 (QHQS…LLTD), and 399–434 (GHTA…QRPD).

Its subcellular location is the cell membrane. The protein resides in the cytoplasm. Its function is as follows. Plays a role in angiogenesis and cell migration. In smooth muscle cell migration, may act through the RhoA pathway. The protein is Angio-associated migratory cell protein (AAMP) of Canis lupus familiaris (Dog).